The following is a 315-amino-acid chain: Beta-carotene hydroxylase 1, chloroplastic (315 aa).

The transit peptide at 1-58 directs the protein to the chloroplast; that stretch reads MAAEISISASSRAICLQRNPFPAPKYFATAPPLLFFSPLTCNLDAILRSRRKPRLAAC. 2 helical membrane passes run 112 to 132 and 146 to 166; these read YLVA…ISVY and FSEM…MEYW. Residues 159 to 286 enclose the Fatty acid hydroxylase domain; the sequence is AAIGMEYWAR…KFDGVPYGLF (128 aa). The short motif at 171–176 is the Histidine box-1 element; that stretch reads HRALWH. Positions 183 to 187 match the Histidine box-2 motif; sequence HESHH. 2 consecutive transmembrane segments (helical) span residues 196–216 and 222–242; these read LNDI…SFGF and IPGL…AYMF. The Histidine box-3 motif lies at 244–249; the sequence is HDGLVH. Residues 270–274 carry the Histidine box-4 motif; it reads HQLHH.

Belongs to the sterol desaturase family.

The protein resides in the plastid. Its subcellular location is the chloroplast membrane. It catalyses the reaction all-trans-beta-carotene + 4 reduced [2Fe-2S]-[ferredoxin] + 2 O2 + 4 H(+) = all-trans-zeaxanthin + 4 oxidized [2Fe-2S]-[ferredoxin] + 2 H2O. The catalysed reaction is all-trans-beta-carotene + 2 reduced [2Fe-2S]-[ferredoxin] + O2 + 2 H(+) = beta-cryptoxanthin + 2 oxidized [2Fe-2S]-[ferredoxin] + H2O. It carries out the reaction beta-cryptoxanthin + 2 reduced [2Fe-2S]-[ferredoxin] + O2 + 2 H(+) = all-trans-zeaxanthin + 2 oxidized [2Fe-2S]-[ferredoxin] + H2O. Its activity is regulated as follows. Inhibited by o-phenanthroline and 8-hydroxyquinoline. Nonheme diiron monooxygenase involved in the biosynthesis of xanthophylls. Specific for beta-ring hydroxylations of beta-carotene. Produces beta-cryptoxanthin and zeaxanthin. Uses ferredoxin as an electron donor. The sequence is that of Beta-carotene hydroxylase 1, chloroplastic from Capsicum annuum (Capsicum pepper).